We begin with the raw amino-acid sequence, 647 residues long: Acetyl-coenzyme A synthetase (647 aa).

Residues arginine 189 to lysine 192, threonine 307, and asparagine 331 each bind CoA. Residues glycine 383 to proline 385, aspartate 407 to threonine 412, aspartate 496, and arginine 511 contribute to the ATP site. Serine 519 is a binding site for CoA. Arginine 522 is an ATP binding site. Mg(2+) contacts are provided by histidine 535 and valine 538. Residue arginine 580 coordinates CoA. An N6-acetyllysine modification is found at lysine 605.

Belongs to the ATP-dependent AMP-binding enzyme family. Mg(2+) is required as a cofactor. Post-translationally, acetylated. Deacetylation by the SIR2-homolog deacetylase activates the enzyme.

The catalysed reaction is acetate + ATP + CoA = acetyl-CoA + AMP + diphosphate. Functionally, catalyzes the conversion of acetate into acetyl-CoA (AcCoA), an essential intermediate at the junction of anabolic and catabolic pathways. AcsA undergoes a two-step reaction. In the first half reaction, AcsA combines acetate with ATP to form acetyl-adenylate (AcAMP) intermediate. In the second half reaction, it can then transfer the acetyl group from AcAMP to the sulfhydryl group of CoA, forming the product AcCoA. The protein is Acetyl-coenzyme A synthetase of Syntrophus aciditrophicus (strain SB).